We begin with the raw amino-acid sequence, 143 residues long: WW domain-containing protein C660.05 (143 aa).

The region spanning 9–44 is the WW domain; that stretch reads GLPAGWVAQWDPTYQAYFYINETFEGAQPQWEPPIP. The disordered stretch occupies residues 115 to 143; it reads HHGPLHGPHGGFGGRGGGRMGGRGGRGRR.

The chain is WW domain-containing protein C660.05 from Schizosaccharomyces pombe (strain 972 / ATCC 24843) (Fission yeast).